Reading from the N-terminus, the 666-residue chain is Chaperone protein dnaK1 (666 aa).

Threonine 198 is modified (phosphothreonine; by autocatalysis).

It belongs to the heat shock protein 70 family.

Functionally, acts as a chaperone. In Prochlorococcus marinus (strain SARG / CCMP1375 / SS120), this protein is Chaperone protein dnaK1 (dnaK1).